We begin with the raw amino-acid sequence, 300 residues long: MPEPHPAPQPYTVAALYQFRALPDPAALRAELLALGERLELCGTLIVADEGINGTVAGSAAAIAELHAFLLASGFDRLEYKESQASEKPFKRYKVRLKKEIVTLGVPVAPREQVGTYLDPQAWNDLLADPEVIVVDTRNRYEVKAGTFQGAVDPEIDSFREFPAWVDEHLAGAEGKKIAMFCTGGIRCEKSTSLLLQKGFQDVYHLKGGILKYLEDVPQAQSRWDGECFVFDGRVTVGHGLQEGDAVMCHSCGWPLTAQERAHPQFEEGVSCEHCFDETTDVQKAAFRERQRMYEAGHLT.

One can recognise a Rhodanese domain in the interval A128 to S222. The active-site Cysteine persulfide intermediate is the C182.

Belongs to the TrhO family.

It carries out the reaction uridine(34) in tRNA + AH2 + O2 = 5-hydroxyuridine(34) in tRNA + A + H2O. Functionally, catalyzes oxygen-dependent 5-hydroxyuridine (ho5U) modification at position 34 in tRNAs. In Deinococcus radiodurans (strain ATCC 13939 / DSM 20539 / JCM 16871 / CCUG 27074 / LMG 4051 / NBRC 15346 / NCIMB 9279 / VKM B-1422 / R1), this protein is tRNA uridine(34) hydroxylase.